The primary structure comprises 569 residues: Oxygen-dependent choline dehydrogenase (569 aa).

An FAD-binding site is contributed by 9–38; sequence DYVIIGGGSAGSVLGNRLSEDKDKEVLVLE. His-475 acts as the Proton acceptor in catalysis.

Belongs to the GMC oxidoreductase family. FAD serves as cofactor.

It catalyses the reaction choline + A = betaine aldehyde + AH2. The catalysed reaction is betaine aldehyde + NAD(+) + H2O = glycine betaine + NADH + 2 H(+). The protein operates within amine and polyamine biosynthesis; betaine biosynthesis via choline pathway; betaine aldehyde from choline (cytochrome c reductase route): step 1/1. In terms of biological role, involved in the biosynthesis of the osmoprotectant glycine betaine. Catalyzes the oxidation of choline to betaine aldehyde and betaine aldehyde to glycine betaine at the same rate. The sequence is that of Oxygen-dependent choline dehydrogenase from Staphylococcus aureus (strain COL).